Reading from the N-terminus, the 346-residue chain is Phosphate acyltransferase (346 aa).

The protein belongs to the PlsX family. Homodimer. Probably interacts with PlsY.

It localises to the cytoplasm. The catalysed reaction is a fatty acyl-[ACP] + phosphate = an acyl phosphate + holo-[ACP]. It participates in lipid metabolism; phospholipid metabolism. Its function is as follows. Catalyzes the reversible formation of acyl-phosphate (acyl-PO(4)) from acyl-[acyl-carrier-protein] (acyl-ACP). This enzyme utilizes acyl-ACP as fatty acyl donor, but not acyl-CoA. The sequence is that of Phosphate acyltransferase from Geobacter sulfurreducens (strain ATCC 51573 / DSM 12127 / PCA).